The following is a 59-amino-acid chain: uncharacterized protein (59 aa).

Its subcellular location is the mitochondrion. This is an uncharacterized protein from Ascobolus immersus.